The sequence spans 626 residues: Two-component response regulator ORR24 (626 aa).

Residues 1–22 (MTVEERQGRVGGHGVSGGGGGR) are disordered. The segment covering 9 to 22 (RVGGHGVSGGGGGR) has biased composition (gly residues). The Response regulatory domain occupies 30–145 (RVLAVDDDPT…QLRTIWQHVI (116 aa)). Aspartate 81 carries the post-translational modification 4-aspartylphosphate. Over residues 151-162 (DAKNRGNDDDAG) the composition is skewed to basic and acidic residues. 2 disordered regions span residues 151 to 215 (DAKN…KKPR) and 402 to 440 (PLES…RTTN). Residues 191–202 (NGDDGDDSDENS) are compositionally biased toward acidic residues. Positions 210–269 (TQKKPRVVWSVELHRKFVAAVNQLGIEKAVPKKILDLMNVENITRENVASHLQKYRLYLK) form a DNA-binding region, myb-like GARP. A compositionally biased stretch (polar residues) spans 402–421 (PLESSNQQHLSRVHSSSADP).

This sequence belongs to the ARR family. Type-B subfamily. Post-translationally, two-component system major event consists of a His-to-Asp phosphorelay between a sensor histidine kinase (HK) and a response regulator (RR). In plants, the His-to-Asp phosphorelay involves an additional intermediate named Histidine-containing phosphotransfer protein (HPt). This multistep phosphorelay consists of a His-Asp-His-Asp sequential transfer of a phosphate group between first a His and an Asp of the HK protein, followed by the transfer to a conserved His of the HPt protein and finally the transfer to an Asp in the receiver domain of the RR protein.

The protein localises to the nucleus. In terms of biological role, transcriptional activator that binds specific DNA sequence. Functions as a response regulator involved in His-to-Asp phosphorelay signal transduction system. Phosphorylation of the Asp residue in the receiver domain activates the ability of the protein to promote the transcription of target genes. May directly activate some type-A response regulators in response to cytokinins. The sequence is that of Two-component response regulator ORR24 from Oryza sativa subsp. japonica (Rice).